Here is a 137-residue protein sequence, read N- to C-terminus: Lysozyme (137 aa).

An N-terminal signal peptide occupies residues 1–20 (MSAVLVLALVLLSLTCVTDA). One can recognise an I-type lysozyme domain in the interval 21-134 (ISDACLTCIC…WNAVKNQGCS (114 aa)). 6 disulfides stabilise this stretch: C25/C102, C30/C37, C42/C51, C64/C84, C74/C80, and C98/C116. Residue E33 is the Proton donor of the active site. The active-site Nucleophile is D45. Substrate is bound at residue 57 to 63 (KKSYWID). Substrate contacts are provided by residues Y88 and 109–111 (HNG).

This sequence belongs to the glycosyl hydrolase 22 family. Type-I lysozyme subfamily.

It localises to the secreted. The catalysed reaction is Hydrolysis of (1-&gt;4)-beta-linkages between N-acetylmuramic acid and N-acetyl-D-glucosamine residues in a peptidoglycan and between N-acetyl-D-glucosamine residues in chitodextrins.. Functionally, has bacteriolytic activity. May play a role in digestion and in the host defense mechanisms against invading microbes. The polypeptide is Lysozyme (lysoz) (Ostrea edulis (Native oyster)).